We begin with the raw amino-acid sequence, 399 residues long: Elongation factor Tu (399 aa).

One can recognise a tr-type G domain in the interval 10–209; sequence KPHVNIGTIG…EVDAYIPTPE (200 aa). A G1 region spans residues 19 to 26; the sequence is GHVDHGKT. 19 to 26 is a binding site for GTP; the sequence is GHVDHGKT. Thr-26 lines the Mg(2+) pocket. The tract at residues 60–64 is G2; sequence GITIA. Positions 81 to 84 are G3; the sequence is DCPG. GTP-binding positions include 81-85 and 136-139; these read DCPGH and NKQD. Residues 136-139 are G4; the sequence is NKQD. Positions 174 to 176 are G5; the sequence is SAL.

Belongs to the TRAFAC class translation factor GTPase superfamily. Classic translation factor GTPase family. EF-Tu/EF-1A subfamily. In terms of assembly, monomer.

The protein resides in the cytoplasm. The catalysed reaction is GTP + H2O = GDP + phosphate + H(+). Functionally, GTP hydrolase that promotes the GTP-dependent binding of aminoacyl-tRNA to the A-site of ribosomes during protein biosynthesis. The protein is Elongation factor Tu of Helicobacter pylori (strain G27).